Consider the following 308-residue polypeptide: Cytochrome b (308 aa).

4 helical membrane passes run 1–21 (SGSL…FLAA), 45–66 (WLIR…YLHI), 81–101 (WNIG…GYVL), and 146–166 (FFAL…VHLT). Heme b is bound by residues H51 and H65. The heme b site is built by H150 and H164. H169 lines the a ubiquinone pocket. Transmembrane regions (helical) follow at residues 194–214 (TKDV…ALFS), 256–276 (LGGV…PLLH), and 288–308 (LSQI…WVGS).

The protein belongs to the cytochrome b family. As to quaternary structure, the cytochrome bc1 complex contains 11 subunits: 3 respiratory subunits (MT-CYB, CYC1 and UQCRFS1), 2 core proteins (UQCRC1 and UQCRC2) and 6 low-molecular weight proteins (UQCRH/QCR6, UQCRB/QCR7, UQCRQ/QCR8, UQCR10/QCR9, UQCR11/QCR10 and a cleavage product of UQCRFS1). This cytochrome bc1 complex then forms a dimer. Heme b is required as a cofactor.

The protein resides in the mitochondrion inner membrane. Functionally, component of the ubiquinol-cytochrome c reductase complex (complex III or cytochrome b-c1 complex) that is part of the mitochondrial respiratory chain. The b-c1 complex mediates electron transfer from ubiquinol to cytochrome c. Contributes to the generation of a proton gradient across the mitochondrial membrane that is then used for ATP synthesis. The polypeptide is Cytochrome b (MT-CYB) (Garritornis isidorei (Papuan babbler)).